The primary structure comprises 235 residues: Large ribosomal subunit protein uL1 (235 aa).

The protein belongs to the universal ribosomal protein uL1 family. In terms of assembly, part of the 50S ribosomal subunit.

In terms of biological role, binds directly to 23S rRNA. The L1 stalk is quite mobile in the ribosome, and is involved in E site tRNA release. Functionally, protein L1 is also a translational repressor protein, it controls the translation of the L11 operon by binding to its mRNA. In Synechococcus sp. (strain CC9311), this protein is Large ribosomal subunit protein uL1.